Reading from the N-terminus, the 139-residue chain is Transcription antitermination protein NusB (139 aa).

This sequence belongs to the NusB family.

Functionally, involved in transcription antitermination. Required for transcription of ribosomal RNA (rRNA) genes. Binds specifically to the boxA antiterminator sequence of the ribosomal RNA (rrn) operons. The polypeptide is Transcription antitermination protein NusB (Nitratiruptor sp. (strain SB155-2)).